The following is a 1774-amino-acid chain: Collagen alpha-1(XVIII) chain (1774 aa).

Residues methionine 1 to alanine 26 form the signal peptide. The nonhelical region 1 (NC1) stretch occupies residues aspartate 27 to glycine 785. Disordered stretches follow at residues aspartate 47 to valine 113 and leucine 218 to lysine 269. Composition is skewed to polar residues over residues lysine 55 to serine 87 and leucine 244 to asparagine 256. N-linked (GlcNAc...) asparagine glycosylation is found at asparagine 354 and asparagine 361. Residues threonine 365–isoleucine 482 enclose the FZ domain. 5 disulfide bridges follow: cysteine 370-cysteine 433, cysteine 380-cysteine 426, cysteine 417-cysteine 455, cysteine 444-cysteine 479, and cysteine 448-cysteine 468. A Laminin G-like domain is found at glycine 522–serine 704. The N-linked (GlcNAc...) asparagine glycan is linked to asparagine 585. Positions arginine 681–alanine 1458 are disordered. Over residues glutamate 708 to threonine 717 the composition is skewed to basic and acidic residues. Residue threonine 730 is modified to Phosphothreonine. The triple-helical region 1 (COL1) stretch occupies residues glycine 786–valine 812. The span at alanine 809–alanine 824 shows a compositional bias: low complexity. Residues valine 813–proline 822 are nonhelical region 2 (NC2). The Collagen-like 1 domain occupies glycine 823–aspartate 878. Residues glycine 823–serine 896 are triple-helical region 2 (COL2). Basic and acidic residues predominate over residues threonine 839–proline 855. Over residues arginine 884–proline 895 the composition is skewed to pro residues. A nonhelical region 3 (NC3) region spans residues phenylalanine 897–arginine 920. A glycan (O-linked (Xyl...) (chondroitin sulfate) serine) is linked at serine 910. The triple-helical region 3 (COL3) stretch occupies residues glycine 921–glycine 1042. The span at phenylalanine 925 to proline 935 shows a compositional bias: pro residues. N-linked (GlcNAc...) asparagine glycosylation occurs at asparagine 947. Positions alanine 951–lysine 963 are enriched in low complexity. Collagen-like domains lie at glycine 953–glycine 1007 and aspartate 1008–proline 1041. Composition is skewed to pro residues over residues proline 967–glutamate 982 and proline 1026–proline 1041. The interval phenylalanine 1043–aspartate 1065 is nonhelical region 4 (NC4). Collagen-like domains follow at residues glycine 1066–glycine 1117, glutamate 1118–proline 1147, proline 1162–glycine 1202, and glutamine 1216–aspartate 1264. The segment at glycine 1066–valine 1148 is triple-helical region 4 (COL4). Residues leucine 1138–proline 1147 show a composition bias toward pro residues. Residues isoleucine 1149 to proline 1162 form a nonhelical region 5 (NC5) region. The segment at glycine 1163–isoleucine 1204 is triple-helical region 5 (COL5). Residues phenylalanine 1205–lysine 1217 are nonhelical region 6 (NC6). The triple-helical region 6 (COL6) stretch occupies residues glycine 1218–proline 1290. Positions proline 1275–methionine 1289 are enriched in pro residues. The interval isoleucine 1291 to serine 1300 is nonhelical region 7 (NC7). Residues glycine 1301–proline 1317 show a composition bias toward low complexity. The tract at residues glycine 1301–phenylalanine 1333 is triple-helical region 7 (COL7). Positions proline 1334–lysine 1345 are nonhelical region 8 (NC8). Residues phenylalanine 1338–glutamate 1362 show a composition bias toward basic and acidic residues. Residues glycine 1346–glycine 1369 form a triple-helical region 8 (COL8) region. Residues arginine 1351–aspartate 1353 carry the Cell attachment site motif. Residues phenylalanine 1370–proline 1376 form a nonhelical region 9 (NC9) region. 4 stretches are compositionally biased toward pro residues: residues proline 1376–proline 1388, proline 1398–proline 1407, proline 1418–proline 1431, and proline 1441–proline 1453. Residues glycine 1377–proline 1428 form a triple-helical region 9 (COL9) region. Residues serine 1429–proline 1441 are nonhelical region 10 (NC10). Positions glycine 1442–serine 1459 are triple-helical region 10 (COL10). The segment at alanine 1460–lysine 1774 is nonhelical region 11 (NC11). Residues aspartate 1474–glutamate 1519 form a non-collagenous domain 1 association domain region. The non-collagenous domain 1 hinge region stretch occupies residues valine 1520 to alanine 1590. Residues histidine 1591, histidine 1593, aspartate 1595, histidine 1601, and aspartate 1666 each coordinate Zn(2+). Intrachain disulfides connect cysteine 1623-cysteine 1763 and cysteine 1725-cysteine 1755.

Belongs to the multiplexin collagen family. Forms homotrimers. Recombinant non-collagenous domain 1 has stronger affinity to NID1, HSPG2 and laminin-1:NID1 complex and lower affinity to FBLN1 and FBLN2 than endostatin. In terms of assembly, monomeric. Interacts with KDR/VEGFR2. Interacts with the ITGA5:ITGB1 complex. Interacts with NID1, HSPG2, laminin-1:NID1 complex, FBLN1 and FBLN2. Prolines at the third position of the tripeptide repeating unit (G-X-Y) of the triple-helical regions are hydroxylated. In terms of processing, undergoes proteolytic processing by CTSL/cathepsin-L and elastase-like proteases to generate both non-collagenous domain 1 trimers and endostatin monomers. In tissue extracts (brain, skeletal muscle, heart, kidney, testis and liver) predominantly bands of approximately 38 kDa are detected; recombinant non-collagenous domain 1 shows similar mobility. In vitro, several proteolytic cleavage sites in the non-collagenous domain 1 hinge region generating different endostatin-like peptides are reported. As to expression, expressed in liver, kidney, lung, skeletal muscle and testis.

The protein resides in the secreted. It is found in the extracellular space. The protein localises to the extracellular matrix. It localises to the basement membrane. Its function is as follows. Probably plays a major role in determining the retinal structure as well as in the closure of the neural tube. May regulate extracellular matrix-dependent motility and morphogenesis of endothelial and non-endothelial cells; the function requires homotrimerization and implicates MAPK signaling. Functionally, potently inhibits endothelial cell proliferation and angiogenesis. May inhibit angiogenesis by binding to the heparan sulfate proteoglycans involved in growth factor signaling. Inhibits VEGFA isoform VEGF165-induced endothelial cell proliferation and migration. Seems to inhibit VEGFA-mediated signaling by blocking the interaction of VEGFA to its receptor KDR/VEGFR2. Modulates endothelial cell migration in an integrin-dependent manner implicating integrin ITGA5:ITGB1 and to a lesser extent ITGAV:ITGB3 and ITGAV:ITGB5. May negatively regulate the activity of homotrimeric non-collagenous domain 1. This Mus musculus (Mouse) protein is Collagen alpha-1(XVIII) chain.